Here is a 172-residue protein sequence, read N- to C-terminus: L-amino acid oxidase (172 aa).

44–47 (GPMR) contributes to the FAD binding site. Residues Arg-47 and His-103 each contribute to the substrate site.

Belongs to the flavin monoamine oxidase family. FIG1 subfamily. As to quaternary structure, heterodimer; non-covalently linked. It depends on FAD as a cofactor. In terms of processing, N-glycosylated. In terms of tissue distribution, expressed by the venom gland.

It is found in the secreted. It catalyses the reaction an L-alpha-amino acid + O2 + H2O = a 2-oxocarboxylate + H2O2 + NH4(+). The enzyme catalyses L-leucine + O2 + H2O = 4-methyl-2-oxopentanoate + H2O2 + NH4(+). It carries out the reaction L-phenylalanine + O2 + H2O = 3-phenylpyruvate + H2O2 + NH4(+). The catalysed reaction is L-tryptophan + O2 + H2O = indole-3-pyruvate + H2O2 + NH4(+). It catalyses the reaction L-methionine + O2 + H2O = 4-methylsulfanyl-2-oxobutanoate + H2O2 + NH4(+). The enzyme catalyses L-isoleucine + O2 + H2O = (S)-3-methyl-2-oxopentanoate + H2O2 + NH4(+). It carries out the reaction L-arginine + O2 + H2O = 5-guanidino-2-oxopentanoate + H2O2 + NH4(+). The catalysed reaction is L-tyrosine + O2 + H2O = 3-(4-hydroxyphenyl)pyruvate + H2O2 + NH4(+). Its activity is regulated as follows. Activity is increased by Mn(2+) ions. Inhibited by Zn(2+), Ni(2+), Co(2+), Cu(2+) and Al(3+). No significant activity change by Na(+), K(+), Ca(2+), Mg(2+) and Ba(2+) ions. Both isoform are completely inhibited by L-Cys and reduced glutathione. O-phenanthroline, beta-mercaptoethanol and PMSF completely inhibit the enzymatic activity of LAAOII, but have no activity on LAAOI. Iodoacetic acid inhibits the enzymatic activity of LAAOII by 46% but has no effect on the LAAOI activity. Its function is as follows. Catalyzes an oxidative deamination of predominantly hydrophobic and aromatic L-amino acids, thus producing hydrogen peroxide that may contribute to the diverse toxic effects of this enzyme. Shows high specificity for L-Arg, L-Met, L-Phe, L-Leu, L-Tyr, L-Ile and L-Trp, low specificity for L-Val, L-Ala, L-Asn, L-Gln, and no specificity for L-Pro, L-Ser, L-Thr, L-Cys, L-Gly and L-Asp. Exhibits diverse biological activities, such as hemorrhage, hemolysis, edema, antibacterial and antiparasitic activities, as well as regulation of platelet aggregation. Its effect on platelets is controversial, since it either induces aggregation or inhibits agonist-induced aggregation. These different effects are probably due to different experimental conditions. The chain is L-amino acid oxidase from Cerastes cerastes (Horned desert viper).